Reading from the N-terminus, the 193-residue chain is Apoptosis-associated speck-like protein containing a CARD (193 aa).

A Pyrin domain is found at 1 to 91 (MGRARDAILD…AEQLQTTKEE (91 aa)). Glycyl lysine isopeptide (Lys-Gly) (interchain with G-Cter in ubiquitin) cross-links involve residues Lys55 and Lys172. The CARD domain occupies 105 to 193 (STARTGHFVD…PYLVMDLEQS (89 aa)). At Ser193 the chain carries Phosphoserine.

As to quaternary structure, self-associates; enforced oligomerization induces apoptosis, NF-kappa-B regulation and interleukin-1 beta secretion. Homooligomers can form disk-like particles of approximately 12 nm diameter and approximately 1 nm height. Component of several inflammasomes containing one pattern recognition receptor/sensor, such as NLRP2, NLRP3, NLRP6, NLRC4, AIM2, MEFV or NOD2, and probably NLRC4 or NLRP12. Major component of the ASC pyroptosome, a 1-2 um supramolecular assembly (one per macrophage cell) which consists of oligomerized PYCARD dimers and CASP1. Interacts with CASP1 (precursor form); the interaction induces activation of CASP1 leading to the processing of interleukin-1 beta; PYCARD competes with RIPK2 for binding to CASP1. Interacts with NLRP3; the interaction requires the homooligomerization of NLRP3. Interacts with NLRP2, NLRC4, MEFV, CARD16, AIM2, NOD2, RIGI, RIPK2, PYDC1, PYDC2, NLRP10, CHUK, IKBKB and BAX. Interacts with CASP8. Component of the AIM2 PANoptosome complex, a multiprotein complex that drives inflammatory cell death (PANoptosis). In terms of processing, phosphorylated. Post-translationally, 'Lys-63'-linked polyubiquitination by TRAF3 is critical for speck formation and inflammasome activation. 'Lys-63'-linked deubiquitinated by USP50; a crucial step for NLRP3-mediated inflammasome activation. 'Lys-63'-linked polyubiquitination by PELI1 is also critical for speck formation and inflammasome activation. Deubiquitinated by USP3 that cleaves 'Lys-48'-linked ubiquitin chains and strengthens its stability by blocking proteasomal degradation. In terms of tissue distribution, expressed in small intestine, colon, thymus, spleen, brain, heart, skeletal muscle, kidney, lung and liver.

The protein resides in the cytoplasm. Its subcellular location is the inflammasome. It is found in the endoplasmic reticulum. The protein localises to the mitochondrion. It localises to the nucleus. Functionally, functions as a key mediator in apoptosis and inflammation. Promotes caspase-mediated apoptosis involving predominantly caspase-8 and also caspase-9 in a probable cell type-specific manner. Involved in activation of the mitochondrial apoptotic pathway, promotes caspase-8-dependent proteolytic maturation of BID independently of FADD in certain cell types and also mediates mitochondrial translocation of BAX and activates BAX-dependent apoptosis coupled to activation of caspase-9, -2 and -3. Involved in innate immune response by acting as an integral adapter in the assembly of various inflammasomes (NLRP2, NLRP3, NLRP6 and AIM2) which recruit and activate caspase-1 leading to processing and secretion of pro-inflammatory cytokines. Caspase-1-dependent inflammation leads to macrophage pyroptosis, a form of cell death. The function as activating adapter in different types of inflammasomes is mediated by the pyrin and CARD domains and their homotypic interactions. Clustered PYCARD nucleates the formation of caspase-1 filaments through the interaction of their respective CARD domains, acting as a platform for of caspase-1 polymerization. In the NLRC4 inflammasomes seems not be required but facilitates the processing of procaspase-1. In cooperation with NOD2 involved in an inflammasome activated by bacterial muramyl dipeptide leading to caspase-1 activation. May be involved in RIGI-triggered pro-inflammatory responses and inflammasome activation. In collaboration with AIM2 which detects cytosolic double-stranded DNA may also be involved in a caspase-1-independent cell death that involves caspase-8. In adaptive immunity may be involved in maturation of dendritic cells to stimulate T-cell immunity and in cytoskeletal rearrangements coupled to chemotaxis and antigen uptake may be involved in post-transcriptional regulation of the guanine nucleotide exchange factor DOCK2; the latter function is proposed to involve the nuclear form. Also involved in transcriptional activation of cytokines and chemokines independent of the inflammasome; this function may involve AP-1, NF-kappa-B, MAPK and caspase-8 signaling pathways. For regulation of NF-kappa-B activating and inhibiting functions have been reported. Modulates NF-kappa-B induction at the level of the IKK complex by inhibiting kinase activity of CHUK and IKBK. Proposed to compete with RIPK2 for association with CASP1 thereby down-regulating CASP1-mediated RIPK2-dependent NF-kappa-B activation and activating interleukin-1 beta processing. Modulates host resistance to DNA virus infection, probably by inducing the cleavage of and inactivating CGAS in presence of cytoplasmic double-stranded DNA. In Mus musculus (Mouse), this protein is Apoptosis-associated speck-like protein containing a CARD (Pycard).